The primary structure comprises 384 residues: S-adenosylmethionine synthase (384 aa).

His-15 contacts ATP. Asp-17 is a Mg(2+) binding site. Residue Glu-43 participates in K(+) binding. L-methionine-binding residues include Glu-56 and Gln-99. The flexible loop stretch occupies residues 99 to 109 (QSPDINQGVDR). ATP is bound by residues 164–166 (DAK), 230–231 (RF), Asp-239, 245–246 (RK), Ala-262, and Lys-266. Asp-239 contacts L-methionine. Residue Lys-270 coordinates L-methionine.

This sequence belongs to the AdoMet synthase family. As to quaternary structure, homotetramer; dimer of dimers. It depends on Mg(2+) as a cofactor. K(+) is required as a cofactor.

The protein resides in the cytoplasm. The enzyme catalyses L-methionine + ATP + H2O = S-adenosyl-L-methionine + phosphate + diphosphate. The protein operates within amino-acid biosynthesis; S-adenosyl-L-methionine biosynthesis; S-adenosyl-L-methionine from L-methionine: step 1/1. In terms of biological role, catalyzes the formation of S-adenosylmethionine (AdoMet) from methionine and ATP. The overall synthetic reaction is composed of two sequential steps, AdoMet formation and the subsequent tripolyphosphate hydrolysis which occurs prior to release of AdoMet from the enzyme. This is S-adenosylmethionine synthase from Shigella boydii serotype 18 (strain CDC 3083-94 / BS512).